A 175-amino-acid chain; its full sequence is Adenine phosphoribosyltransferase (175 aa).

Belongs to the purine/pyrimidine phosphoribosyltransferase family. Homodimer.

The protein resides in the cytoplasm. It carries out the reaction AMP + diphosphate = 5-phospho-alpha-D-ribose 1-diphosphate + adenine. Its pathway is purine metabolism; AMP biosynthesis via salvage pathway; AMP from adenine: step 1/1. Catalyzes a salvage reaction resulting in the formation of AMP, that is energically less costly than de novo synthesis. The protein is Adenine phosphoribosyltransferase of Synechococcus sp. (strain JA-3-3Ab) (Cyanobacteria bacterium Yellowstone A-Prime).